The chain runs to 560 residues: Protein GAT2 (560 aa).

Disordered regions lie at residues 274–297 (RQQE…FSNK), 345–383 (FLST…ISSS), and 412–461 (LNTK…SDEK). The span at 347-361 (STSSSSPSPTAGSAP) shows a compositional bias: low complexity. The span at 369-378 (RQDDPNDKKM) shows a compositional bias: basic and acidic residues. Residues 414–425 (TKKKNNRGRPRA) are compositionally biased toward basic residues. Residues 428 to 456 (RQPTLTTSSHFINNSNPGAAAVSTTTPAA) are compositionally biased toward polar residues. The GATA-type zinc-finger motif lies at 472–497 (CFHCGETETPEWRKGPYGTRTLCNAC).

The chain is Protein GAT2 (GAT2) from Saccharomyces cerevisiae (strain ATCC 204508 / S288c) (Baker's yeast).